A 253-amino-acid polypeptide reads, in one-letter code: Protein PET20, mitochondrial (253 aa).

The transit peptide at 1–36 (MLKLARPFIPPLSRNNAISSGIVLTSRRFQSSFTFL) directs the protein to the mitochondrion. The tract at residues 44–93 (KNQMKSKRKKGSKKAAYHRQPPEHEHTAPLIKQNKTITKKEHSDVRGSHL) is disordered. The span at 47–60 (MKSKRKKGSKKAAY) shows a compositional bias: basic residues. A compositionally biased stretch (basic and acidic residues) spans 81 to 90 (TKKEHSDVRG).

The protein localises to the mitochondrion. In terms of biological role, required for respiratory growth, stability of the mitochondrial genome and for proper assembly or maintenance of mitochondrial proteins. This is Protein PET20, mitochondrial (PET20) from Saccharomyces cerevisiae (strain ATCC 204508 / S288c) (Baker's yeast).